The sequence spans 242 residues: Uridylate kinase (242 aa).

17-20 is a binding site for ATP; that stretch reads KLSG. G59 is a UMP binding site. ATP is bound by residues G60 and R64. UMP is bound by residues D79 and 140–147; that span reads LGNPFFTT. T167, Y173, and D176 together coordinate ATP.

It belongs to the UMP kinase family. In terms of assembly, homohexamer.

It is found in the cytoplasm. It catalyses the reaction UMP + ATP = UDP + ADP. It participates in pyrimidine metabolism; CTP biosynthesis via de novo pathway; UDP from UMP (UMPK route): step 1/1. With respect to regulation, inhibited by UTP. In terms of biological role, catalyzes the reversible phosphorylation of UMP to UDP. This chain is Uridylate kinase, found in Buchnera aphidicola subsp. Baizongia pistaciae (strain Bp).